We begin with the raw amino-acid sequence, 563 residues long: Phosphomethylpyrimidine synthase (563 aa).

Residues 95 to 115 (PGKNPSPMNNRTPVRAKQGKS) form a disordered region. Substrate contacts are provided by residues Asn200, Met229, Tyr258, His294, 314 to 316 (SRG), 355 to 358 (DALR), and Glu394. A Zn(2+)-binding site is contributed by His398. Tyr421 contacts substrate. His462 is a Zn(2+) binding site. Cys544, Cys547, and Cys552 together coordinate [4Fe-4S] cluster.

The protein belongs to the ThiC family. [4Fe-4S] cluster is required as a cofactor.

The enzyme catalyses 5-amino-1-(5-phospho-beta-D-ribosyl)imidazole + S-adenosyl-L-methionine = 4-amino-2-methyl-5-(phosphooxymethyl)pyrimidine + CO + 5'-deoxyadenosine + formate + L-methionine + 3 H(+). Its pathway is cofactor biosynthesis; thiamine diphosphate biosynthesis. Its function is as follows. Catalyzes the synthesis of the hydroxymethylpyrimidine phosphate (HMP-P) moiety of thiamine from aminoimidazole ribotide (AIR) in a radical S-adenosyl-L-methionine (SAM)-dependent reaction. The sequence is that of Phosphomethylpyrimidine synthase from Chlorobium phaeobacteroides (strain BS1).